Consider the following 151-residue polypeptide: MFSTGTLLLAALISPALAGPWAIICAGKSSNEIRTCDGHGCGQYTAQRNQKLHQGVDVLCSDGSTVYAPFTGKIMGQEKPYKNKNAINNGVRISGGGFCIKMFYIKPIKYKGSIKKGEKLGTLLPLQKVYPGIQSHIHIENCDLSDPTVYL.

The signal sequence occupies residues 1–18; sequence MFSTGTLLLAALISPALA. Cystine bridges form between cysteine 25/cysteine 60, cysteine 36/cysteine 41, and cysteine 99/cysteine 142. Zn(2+) is bound by residues histidine 53, aspartate 57, and histidine 138.

This sequence belongs to the LECT2/MIM-1 family.

The protein resides in the secreted. In terms of biological role, has a neutrophil chemotactic activity. Also a positive regulator of chondrocyte proliferation. The polypeptide is Leukocyte cell-derived chemotaxin-2 (LECT2) (Bos taurus (Bovine)).